We begin with the raw amino-acid sequence, 439 residues long: Probable aspartic proteinase GIP2 (439 aa).

The signal sequence occupies residues M1–A23. The Peptidase A1 domain maps to Y47 to T420. N-linked (GlcNAc...) asparagine glycosylation is found at N116, N280, N323, and N434.

It belongs to the peptidase A1 family. Interacts with the Phytophtora parasitica xyloglucanase XEG1 and xyloglucanase-like XLP1. Possesses stronger binding affinity with XLP1, a truncated paralog of P.parasitica XEG1 which has no enzyme activity.

The protein localises to the secreted. Its subcellular location is the extracellular space. It is found in the apoplast. In terms of biological role, involved in plant defense against Phytophtora parasitica. Contributes positively to Nicotiana resistance against P.parasitica. Binds the P.parasitica xyloglucanase XEG1 and inhibits its cell wall degrading enzyme activity and its contribution as P.parasitica virulence factor. XEG1 acts as an important virulence factor during P.parasitica infection but also acts as a pathogen-associated molecular pattern (PAMP) in Nictotiana species, where it can trigger defense responses including cell death. (Microbial infection) Possesses stronger binding affinity with XLP1, a truncated paralog of P.parasitica XEG1 which has no enzyme activity. Is impaired in its inhibitor activity towards the P.parasitica xyloglucanase XEG1 when hijacked by XLP1 binding. In Nicotiana benthamiana, this protein is Probable aspartic proteinase GIP2.